The sequence spans 170 residues: Cyclic pyranopterin monophosphate synthase (170 aa).

Residues 75 to 77 and 115 to 116 contribute to the substrate site; these read MCH and ME. Residue D130 is part of the active site.

This sequence belongs to the MoaC family. Homohexamer; trimer of dimers.

It catalyses the reaction (8S)-3',8-cyclo-7,8-dihydroguanosine 5'-triphosphate = cyclic pyranopterin phosphate + diphosphate. The protein operates within cofactor biosynthesis; molybdopterin biosynthesis. In terms of biological role, catalyzes the conversion of (8S)-3',8-cyclo-7,8-dihydroguanosine 5'-triphosphate to cyclic pyranopterin monophosphate (cPMP). In Bacillus subtilis (strain 168), this protein is Cyclic pyranopterin monophosphate synthase.